A 226-amino-acid chain; its full sequence is Leucyl/phenylalanyl-tRNA--protein transferase (226 aa).

This sequence belongs to the L/F-transferase family.

Its subcellular location is the cytoplasm. The catalysed reaction is N-terminal L-lysyl-[protein] + L-leucyl-tRNA(Leu) = N-terminal L-leucyl-L-lysyl-[protein] + tRNA(Leu) + H(+). It carries out the reaction N-terminal L-arginyl-[protein] + L-leucyl-tRNA(Leu) = N-terminal L-leucyl-L-arginyl-[protein] + tRNA(Leu) + H(+). The enzyme catalyses L-phenylalanyl-tRNA(Phe) + an N-terminal L-alpha-aminoacyl-[protein] = an N-terminal L-phenylalanyl-L-alpha-aminoacyl-[protein] + tRNA(Phe). Functions in the N-end rule pathway of protein degradation where it conjugates Leu, Phe and, less efficiently, Met from aminoacyl-tRNAs to the N-termini of proteins containing an N-terminal arginine or lysine. The chain is Leucyl/phenylalanyl-tRNA--protein transferase from Bradyrhizobium sp. (strain ORS 278).